The following is a 308-amino-acid chain: uncharacterized protein (308 aa).

A coiled-coil region spans residues E212–H242.

This is an uncharacterized protein from Ostreid herpesvirus 1 (isolate France) (OsHV-1).